The chain runs to 127 residues: E3 ubiquitin-protein ligase PPP1R11 (127 aa).

Disordered regions lie at residues 1 to 55 (MAEA…EHMG) and 70 to 127 (AFGE…PMQH). At A2 the chain carries N-acetylalanine. Residues 11–23 (ETVTETTVTVTTE) are compositionally biased toward low complexity. A compositionally biased stretch (basic and acidic residues) spans 40–55 (KKVEWSSDTVDNEHMG). The segment at 53-63 (HMGRRSSKCCC) is atypical RING finger domain 1. 2 positions are modified to phosphoserine: S74 and S75. A Phosphothreonine modification is found at T76. Position 78 is a phosphoserine (S78). Residues 86–95 (CGHTHCVRGH) are atypical RING finger domain 2. Residues 90 to 100 (HCVRGHRKGRR) show a composition bias toward basic residues. Over residues 103–127 (TPGPTPTTPPQPPDPSQPPPGPMQH) the composition is skewed to pro residues. T110 is subject to Phosphothreonine.

Interacts with TLR2 and UBE2D2. Post-translationally, auto-ubiquitinated.

It carries out the reaction S-ubiquitinyl-[E2 ubiquitin-conjugating enzyme]-L-cysteine + [acceptor protein]-L-lysine = [E2 ubiquitin-conjugating enzyme]-L-cysteine + N(6)-ubiquitinyl-[acceptor protein]-L-lysine.. The protein operates within protein modification; protein ubiquitination. In terms of biological role, atypical E3 ubiquitin-protein ligase which ubiquitinates TLR2 at 'Lys-754' leading to its degradation by the proteasome. Plays a role in regulating inflammatory cytokine release and gram-positive bacterial clearance by functioning, in part, through the ubiquitination and degradation of TLR2. Inhibitor of protein phosphatase 1. The sequence is that of E3 ubiquitin-protein ligase PPP1R11 (Ppp1r11) from Rattus norvegicus (Rat).